Here is a 379-residue protein sequence, read N- to C-terminus: Probable peptidoglycan glycosyltransferase FtsW (379 aa).

The Cytoplasmic segment spans residues 1 to 15 (MHKTEAQTYLLYDRT). Residues 16–36 (LLLLTMGLVGIGLVMVISTSM) traverse the membrane as a helical segment. At 37 to 52 (PIGVRLSEDPFYFARR) the chain is on the periplasmic side. A helical transmembrane segment spans residues 53-73 (YAFYLGLAVVLSLVTLGIPMA). The Cytoplasmic segment spans residues 74 to 79 (SWQRGS). The chain crosses the membrane as a helical span at residues 80–100 (SLILLITLIMLLLVLIAGQSV). Over 101–113 (NGAVRWLALGPWR) the chain is Periplasmic. The chain crosses the membrane as a helical span at residues 114–133 (IQPAELSKLALFCYLASYLV). At 134 to 139 (RKAEEV) the chain is on the cytoplasmic side. The chain crosses the membrane as a helical span at residues 140–162 (RTNFWGFCKPIGVMVLLAILLLA). Residues 163-165 (QPD) lie on the Periplasmic side of the membrane. The chain crosses the membrane as a helical span at residues 166–183 (LGTVLVLFITTLAMLFLA). Residues 184 to 186 (EAK) are Cytoplasmic-facing. The chain crosses the membrane as a helical span at residues 187-207 (IWQFLPIIGTGILAVMLLIIA). Topologically, residues 208-269 (KPYRRRRVTS…TEAHTDFICS (62 aa)) are periplasmic. Residues 270–290 (ILGEELGYFGVLLALLMVFLV) form a helical membrane-spanning segment. Residues 291-301 (AFRAMSIGRKA) lie on the Cytoplasmic side of the membrane. The helical transmembrane segment at 302 to 322 (LAINQIFSGFLACSIGIWFSF) threads the bilayer. Topologically, residues 323 to 342 (QTMVNVGAAAGMLPTKGLTL) are periplasmic. The chain crosses the membrane as a helical span at residues 343–363 (PFISYGGSSMLIMLTAIVLLI). Over 364–379 (RIDFETRLAKLQAFVR) the chain is Cytoplasmic.

This sequence belongs to the SEDS family. FtsW subfamily.

The protein resides in the cell inner membrane. It carries out the reaction [GlcNAc-(1-&gt;4)-Mur2Ac(oyl-L-Ala-gamma-D-Glu-L-Lys-D-Ala-D-Ala)](n)-di-trans,octa-cis-undecaprenyl diphosphate + beta-D-GlcNAc-(1-&gt;4)-Mur2Ac(oyl-L-Ala-gamma-D-Glu-L-Lys-D-Ala-D-Ala)-di-trans,octa-cis-undecaprenyl diphosphate = [GlcNAc-(1-&gt;4)-Mur2Ac(oyl-L-Ala-gamma-D-Glu-L-Lys-D-Ala-D-Ala)](n+1)-di-trans,octa-cis-undecaprenyl diphosphate + di-trans,octa-cis-undecaprenyl diphosphate + H(+). The protein operates within cell wall biogenesis; peptidoglycan biosynthesis. In terms of biological role, peptidoglycan polymerase that is essential for cell division. This Moranella endobia (strain PCIT) protein is Probable peptidoglycan glycosyltransferase FtsW.